An 845-amino-acid polypeptide reads, in one-letter code: Protein kintoun (845 aa).

Residues 362–382 (SKEQAQMHETLRHFSREDSGV) are compositionally biased toward basic and acidic residues. Disordered stretches follow at residues 362–420 (SKEQ…PVRH), 575–691 (QALK…SMSD), and 773–845 (AQHR…EMDD). Ser-380 carries the post-translational modification Phosphoserine. The span at 391–400 (PVEEDPDGEL) shows a compositional bias: acidic residues. The segment covering 584–593 (GTKEEEKENQ) has biased composition (basic and acidic residues). A compositionally biased stretch (basic residues) spans 611 to 622 (KPGKKQRKRNKK). Residues 640 to 671 (LTKNSELQPKSTFNLPQRKQRSYSECNDSTGG) are compositionally biased toward polar residues. The residue at position 779 (Ser-779) is a Phosphoserine. The span at 794 to 804 (LKQQENQSRNC) shows a compositional bias: polar residues.

It belongs to the PIH1 family. Kintoun subfamily. As to quaternary structure, interacts with Pp1alpha-96A, Pp1-87B, Pp1-13C and flw.

It is found in the cytoplasm. Functionally, required for cytoplasmic pre-assembly of axonemal dyneins, thereby playing a central role in motility in cilia and flagella. Involved in pre-assembly of dynein arm complexes in the cytoplasm before intraflagellar transport loads them for the ciliary compartment. The protein is Protein kintoun of Drosophila erecta (Fruit fly).